The following is a 186-amino-acid chain: Large ribosomal subunit protein uL6 (186 aa).

It belongs to the universal ribosomal protein uL6 family. As to quaternary structure, part of the 50S ribosomal subunit.

This protein binds to the 23S rRNA, and is important in its secondary structure. It is located near the subunit interface in the base of the L7/L12 stalk, and near the tRNA binding site of the peptidyltransferase center. The chain is Large ribosomal subunit protein uL6 from Hyperthermus butylicus (strain DSM 5456 / JCM 9403 / PLM1-5).